The following is a 99-amino-acid chain: Small ribosomal subunit protein uS17 (99 aa).

Belongs to the universal ribosomal protein uS17 family. As to quaternary structure, part of the 30S ribosomal subunit.

In terms of biological role, one of the primary rRNA binding proteins, it binds specifically to the 5'-end of 16S ribosomal RNA. In Thermosipho melanesiensis (strain DSM 12029 / CIP 104789 / BI429), this protein is Small ribosomal subunit protein uS17.